A 54-amino-acid chain; its full sequence is MRFQPLFWVFFIFAMSLLFISEQKPVNFPRRRKLYRHNCFRRRCIPLHSRVPFP.

Residues Met-1 to Gln-23 form the signal peptide.

This sequence belongs to the Elabela/Toddler family. Interacts with APLNR. Expressed in the placenta. Expressed in syncytiotrophoblasts of the placenta labyrinth at 10.5 dpc. Expressed in placental chorionic trophoblasts (at protein level). Expressed in a small population of epiblast cells in the distal half of the embryo at 7 dpc. Expressed in newly formed definitive endoderm cells in the proximal half of the embryo, while it is not present in extra-embryonic endoderm at 7.5 dpc. This expression pattern then changes to the ventral aspect of the developing foregut pocket and the entire hindgut pocket at 8.5 dpc, before becoming restricted to the foregut overlying the heart and the posterior-most hindgut. Not detected in endothelial precursor cells of the yolk sac at 8 dpc. Expressed in extraembryonic tissues as well as in the chorion at 8.25 dpc. Expressed in endometrial stroma of the uterus of pregnant mice at 8.5 dpc. Expressed in the developing heart, caudal neural tube and trophobasts at 9 dpc. Expressed in the chorionic plate of the chorioallantoic placenta at 9 dpc. Expressed in the posterior half of the ventral neural tube at 9.25 dpc. Expressed in trophoblast cells at the periphery of the placenta at 9.5 dpc. Expressed in collecting ducts of the kidney of pregnant mice at 10.5 dpc. Expressed in the epicardium of the developing heart at 11.5 dpc. Expressed weakly in the adult heart. Expressed in endothelial cells and fibroblasts and weakly in cardiomyocytes.

The protein localises to the secreted. The protein resides in the extracellular space. Functionally, peptide hormone that functions as endogenous ligand for the G-protein-coupled apelin receptor (APLNR/APJ), that plays a role in the regulation of normal cardiovascular function and fluid homeostasis. Functions as a balanced agonist activating both G(i) protein pathway and beta-arrestin pathway of APLNR. Downstream G proteins activation, apelin can inhibit cAMP production and activate key intracellular effectors such as ERKs. On the other hand, APLNR activation induces beta-arrestin recruitment to the membrane leading to desensitization and internalization of the receptor. Required for mesendodermal differentiation, blood vessels formation and heart morphogenesis during early development and for adult cardiovascular homeostasis. Acts as a motogen by promoting mesendodermal cell migration during gastrulation by binding and activating APLNR. Acts as an early embryonic regulator of cellular movement with a role in migration and development of cardiac progenitor cells. May act as a chemoattractant for the activation of angioblast migration toward the embryonic midline, i.e. the position of the future vessel formation, during vasculogenesis. Positively regulates sinus venosus (SV)-derived endothelial cells migration into the developing heart to promote coronary blood vessel sprouting. Plays a role in placental vascular development; promotes placental trophoblast invasion and spiral artery remodeling in the uterus. Involved in the regulation of maternal cardiovascular homeostasis to prevent gestational hypertension and for potent cardioprotective functions during heart failure. Mediates myocardial contractility in an ERK1/2-dependent manner. The protein is Apelin receptor early endogenous ligand of Mus musculus (Mouse).